Reading from the N-terminus, the 887-residue chain is Alanine--tRNA ligase (887 aa).

Zn(2+)-binding residues include His579, His583, Cys681, and His685.

This sequence belongs to the class-II aminoacyl-tRNA synthetase family. Zn(2+) serves as cofactor.

Its subcellular location is the cytoplasm. The enzyme catalyses tRNA(Ala) + L-alanine + ATP = L-alanyl-tRNA(Ala) + AMP + diphosphate. Catalyzes the attachment of alanine to tRNA(Ala) in a two-step reaction: alanine is first activated by ATP to form Ala-AMP and then transferred to the acceptor end of tRNA(Ala). Also edits incorrectly charged Ser-tRNA(Ala) and Gly-tRNA(Ala) via its editing domain. The protein is Alanine--tRNA ligase of Flavobacterium psychrophilum (strain ATCC 49511 / DSM 21280 / CIP 103535 / JIP02/86).